The chain runs to 457 residues: ATP synthase subunit beta (457 aa).

150–157 is a binding site for ATP; sequence GGAGVGKT.

The protein belongs to the ATPase alpha/beta chains family. In terms of assembly, F-type ATPases have 2 components, CF(1) - the catalytic core - and CF(0) - the membrane proton channel. CF(1) has five subunits: alpha(3), beta(3), gamma(1), delta(1), epsilon(1). CF(0) has three main subunits: a(1), b(2) and c(9-12). The alpha and beta chains form an alternating ring which encloses part of the gamma chain. CF(1) is attached to CF(0) by a central stalk formed by the gamma and epsilon chains, while a peripheral stalk is formed by the delta and b chains.

The protein resides in the cell membrane. It catalyses the reaction ATP + H2O + 4 H(+)(in) = ADP + phosphate + 5 H(+)(out). Functionally, produces ATP from ADP in the presence of a proton gradient across the membrane. The catalytic sites are hosted primarily by the beta subunits. The protein is ATP synthase subunit beta of Baumannia cicadellinicola subsp. Homalodisca coagulata.